The sequence spans 227 residues: Translation initiation factor 6 (227 aa).

Belongs to the eIF-6 family.

Functionally, binds to the 50S ribosomal subunit and prevents its association with the 30S ribosomal subunit to form the 70S initiation complex. This Methanococcus vannielii (strain ATCC 35089 / DSM 1224 / JCM 13029 / OCM 148 / SB) protein is Translation initiation factor 6.